The following is a 657-amino-acid chain: MDTRDLTAYSAEKFKELDRIIAEAKRQSILDVLKGICDEHLAHSKNSIIALYISGIISLSKQLLDDSCLVTLLTIFGDNHKNQIVEHLCTRVLEYGESKLALRALGECYKTSGNEQLYDVWERLVRIDYEEAEITRVLADKYEQEGNKEKATEFYKKALYRFIARRQNAAIKEVWTKLVALIPDDVEFFYREQKKISEKLGEGRGSVLMQDVYVYYKENEDWTTCINILKHILEHDEKDVWARKEIIENFRCKYRGHSQLEEYLKISNISQSWRNVFEAINDFEKHISFDEGSFVFHRTWGVGRIAKVCNDELLIDFAKRRAHTMLLKMAISALQTLGKEHIWVLKSVLKRQDLAAKIRQDPEWALKVIITSFDNNCNLKKVKQELVPSLLSVGEWTSWSTKARKILKESTGFAANPSNIDFYTVRSCPVSLEEKLAVEFKAQKNFFARIDILNTFMDKADTDSDAFREMFDYFNTFLRAFSVVDGNVIAAYLVVTRVSTVLPHLNACRPHGFADLYAHIADPRLVYTEIKDKGLKWEFVNSVKNFVSNWSDEYVKLFPEVLSLEILRALMEEGYKEKALRVVEACFEYYADNRAAVIWLFKTVRMSLGSRSCALPQNSGLSSSSTLWTLLIGKSLTGGTPLRTENLTAGSFGTLWE.

One can recognise a GRAD2 domain in the interval 1–152 (MDTRDLTAYS…EQEGNKEKAT (152 aa)). Residues 153–657 (EFYKKALYRF…TAGSFGTLWE (505 aa)) enclose the GRAD1 domain.

The sequence is that of Putative GreA-associated domains protein from Treponema pallidum (strain Nichols).